The chain runs to 113 residues: Probable 4-amino-4-deoxy-L-arabinose-phosphoundecaprenol flippase subunit ArnE (113 aa).

3 helical membrane-spanning segments follow: residues 39-59 (IFWL…WLRL), 62-82 (ILPL…VTLI), and 91-111 (VNVK…LMSM). One can recognise an EamA domain in the interval 42 to 111 (LITAIAMLGF…IMLGIVLMSM (70 aa)).

This sequence belongs to the ArnE family. In terms of assembly, heterodimer of ArnE and ArnF.

The protein resides in the cell inner membrane. It participates in bacterial outer membrane biogenesis; lipopolysaccharide biosynthesis. Functionally, translocates 4-amino-4-deoxy-L-arabinose-phosphoundecaprenol (alpha-L-Ara4N-phosphoundecaprenol) from the cytoplasmic to the periplasmic side of the inner membrane. The polypeptide is Probable 4-amino-4-deoxy-L-arabinose-phosphoundecaprenol flippase subunit ArnE (Proteus mirabilis (strain HI4320)).